Reading from the N-terminus, the 79-residue chain is Cytochrome b (79 aa).

3 helical membrane passes run 1–7, 31–52, and 67–79; these read SALFLAM, WLIR…YLHI, and WNIG…LTMA. Residues His-37 and His-51 each contribute to the heme b site.

It belongs to the cytochrome b family. In terms of assembly, the cytochrome bc1 complex contains 11 subunits: 3 respiratory subunits (MT-CYB, CYC1 and UQCRFS1), 2 core proteins (UQCRC1 and UQCRC2) and 6 low-molecular weight proteins (UQCRH/QCR6, UQCRB/QCR7, UQCRQ/QCR8, UQCR10/QCR9, UQCR11/QCR10 and a cleavage product of UQCRFS1). This cytochrome bc1 complex then forms a dimer. Requires heme b as cofactor.

The protein localises to the mitochondrion inner membrane. Functionally, component of the ubiquinol-cytochrome c reductase complex (complex III or cytochrome b-c1 complex) that is part of the mitochondrial respiratory chain. The b-c1 complex mediates electron transfer from ubiquinol to cytochrome c. Contributes to the generation of a proton gradient across the mitochondrial membrane that is then used for ATP synthesis. This chain is Cytochrome b (MT-CYB), found in Dipodomys panamintinus (Panamint kangaroo rat).